A 95-amino-acid polypeptide reads, in one-letter code: Aspartyl/glutamyl-tRNA(Asn/Gln) amidotransferase subunit C (95 aa).

This sequence belongs to the GatC family. In terms of assembly, heterotrimer of A, B and C subunits.

It carries out the reaction L-glutamyl-tRNA(Gln) + L-glutamine + ATP + H2O = L-glutaminyl-tRNA(Gln) + L-glutamate + ADP + phosphate + H(+). The catalysed reaction is L-aspartyl-tRNA(Asn) + L-glutamine + ATP + H2O = L-asparaginyl-tRNA(Asn) + L-glutamate + ADP + phosphate + 2 H(+). Allows the formation of correctly charged Asn-tRNA(Asn) or Gln-tRNA(Gln) through the transamidation of misacylated Asp-tRNA(Asn) or Glu-tRNA(Gln) in organisms which lack either or both of asparaginyl-tRNA or glutaminyl-tRNA synthetases. The reaction takes place in the presence of glutamine and ATP through an activated phospho-Asp-tRNA(Asn) or phospho-Glu-tRNA(Gln). The protein is Aspartyl/glutamyl-tRNA(Asn/Gln) amidotransferase subunit C of Bartonella henselae (strain ATCC 49882 / DSM 28221 / CCUG 30454 / Houston 1) (Rochalimaea henselae).